A 413-amino-acid chain; its full sequence is O-methyltransferase kntB (413 aa).

S-adenosyl-L-methionine contacts are provided by residues 255-256, D280, 302-303, and R319; these read GG and NF. H322 functions as the Proton acceptor in the catalytic mechanism.

This sequence belongs to the class I-like SAM-binding methyltransferase superfamily. Cation-independent O-methyltransferase family. The cofactor is S-adenosyl-L-methionine.

It participates in secondary metabolite biosynthesis. Non-reducing polyketide synthase; part of the gene cluster that mediates the biosynthesis of the bicoumarin kotanin. The non-reducing polyketide synthase ktnS first catalyzes the formation of the pentaketidic 4,7-dihydroxy-5-methylcoumarin from acetyl coenzyme A and 4 malonyl coenzyme A molecules. Further O-methylation by ktnB leads to the formation of 7-demethylsiderin. Then, an oxidative phenol coupling catalyzed by the cytochrome P450 monooxygenase ktnC forms the 8,8'-dimer P-orlandin via dimerization the monomeric precursor, 7-demethylsiderin. P-orlandin is subsequently O-methylated in a stepwise fashion to demethylkotanin and kotanin. In Aspergillus niger (strain ATCC MYA-4892 / CBS 513.88 / FGSC A1513), this protein is O-methyltransferase kntB.